Consider the following 413-residue polypeptide: Putative F-box/kelch-repeat protein At4g22430 (413 aa).

Residues N5–L54 enclose the F-box domain. The stretch at N168–L210 is one Kelch repeat.

This chain is Putative F-box/kelch-repeat protein At4g22430, found in Arabidopsis thaliana (Mouse-ear cress).